We begin with the raw amino-acid sequence, 110 residues long: Thiosulfate sulfurtransferase GlpE (110 aa).

A Rhodanese domain is found at 19-107; the sequence is EDSLAVLVDI…WRRQALPIIQ (89 aa). The active-site Cysteine persulfide intermediate is Cys67.

Belongs to the GlpE family.

Its subcellular location is the cytoplasm. The enzyme catalyses thiosulfate + hydrogen cyanide = thiocyanate + sulfite + 2 H(+). It catalyses the reaction thiosulfate + [thioredoxin]-dithiol = [thioredoxin]-disulfide + hydrogen sulfide + sulfite + 2 H(+). Its function is as follows. Transferase that catalyzes the transfer of sulfur from thiosulfate to thiophilic acceptors such as cyanide or dithiols. May function in a CysM-independent thiosulfate assimilation pathway by catalyzing the conversion of thiosulfate to sulfite, which can then be used for L-cysteine biosynthesis. The polypeptide is Thiosulfate sulfurtransferase GlpE (Photobacterium profundum (strain SS9)).